The sequence spans 312 residues: tRNA dimethylallyltransferase (312 aa).

11-18 lines the ATP pocket; it reads GPTAVGKT. 13–18 is a substrate binding site; it reads TAVGKT. The tract at residues 159–163 is interaction with substrate tRNA; sequence QRVLR.

This sequence belongs to the IPP transferase family. In terms of assembly, monomer. Mg(2+) serves as cofactor.

It carries out the reaction adenosine(37) in tRNA + dimethylallyl diphosphate = N(6)-dimethylallyladenosine(37) in tRNA + diphosphate. Functionally, catalyzes the transfer of a dimethylallyl group onto the adenine at position 37 in tRNAs that read codons beginning with uridine, leading to the formation of N6-(dimethylallyl)adenosine (i(6)A). The chain is tRNA dimethylallyltransferase from Macrococcus caseolyticus (strain JCSC5402) (Macrococcoides caseolyticum).